A 393-amino-acid chain; its full sequence is Protein TsgA (393 aa).

The next 12 membrane-spanning stretches (helical) occupy residues 11-31, 51-71, 78-98, 101-121, 134-154, 162-182, 206-226, 245-265, 273-293, 298-318, 332-352, and 361-381; these read WISF…GMVM, FLNA…EIVP, FGFI…SLAL, AAMF…TFLI, LLFT…VAAF, WYWV…LTFG, IGVL…LGFI, ALVS…SFIL, ILTV…TGTQ, WFIL…ITLG, FILT…GPIV, and LLTA…LGFV.

The protein belongs to the major facilitator superfamily. TsgA family.

The protein resides in the cell inner membrane. In Salmonella dublin (strain CT_02021853), this protein is Protein TsgA.